The chain runs to 485 residues: 1-aminocyclopropane-1-carboxylate synthase 2 (485 aa).

Substrate contacts are provided by E55 and Y92. K278 is modified (N6-(pyridoxal phosphate)lysine). S460 carries the phosphoserine modification.

This sequence belongs to the class-I pyridoxal-phosphate-dependent aminotransferase family. As to quaternary structure, homodimer and heterodimer. In vivo, the relevance of heterodimerization with other ACS enzymes is however unsure. Pyridoxal 5'-phosphate is required as a cofactor. In terms of processing, phosphorylated on Ser 460; phosphorylation may regulate its turnover. May be processed at its C-terminus.

The catalysed reaction is S-adenosyl-L-methionine = 1-aminocyclopropane-1-carboxylate + S-methyl-5'-thioadenosine + H(+). It participates in alkene biosynthesis; ethylene biosynthesis via S-adenosyl-L-methionine; ethylene from S-adenosyl-L-methionine: step 1/2. In terms of biological role, 1-aminocyclopropane-1-carboxylate synthase (ACS) enzymes catalyze the conversion of S-adenosyl-L-methionine (SAM) into 1-aminocyclopropane-1-carboxylate (ACC), a direct precursor of ethylene. This Solanum lycopersicum (Tomato) protein is 1-aminocyclopropane-1-carboxylate synthase 2 (ACS2).